Here is a 186-residue protein sequence, read N- to C-terminus: MSENTQPEQNQPLTGAPSPEELEAAQAANEFDALTQAQAELVTLQAKNTELADSYLRAKAETENARRRADDEIAKARKFALESFAESLLPVVDSLEAGLAHKDATPEQIREGADATLKQLKTTLERNKIVEINPASGSRFDPHQHQAISMVPAEQEANTVVSVLQKGYLISDRVLRPALVTVTAPK.

A compositionally biased stretch (polar residues) spans Met-1–Leu-13. The tract at residues Met-1–Leu-22 is disordered.

This sequence belongs to the GrpE family. Homodimer.

It is found in the cytoplasm. Its function is as follows. Participates actively in the response to hyperosmotic and heat shock by preventing the aggregation of stress-denatured proteins, in association with DnaK and GrpE. It is the nucleotide exchange factor for DnaK and may function as a thermosensor. Unfolded proteins bind initially to DnaJ; upon interaction with the DnaJ-bound protein, DnaK hydrolyzes its bound ATP, resulting in the formation of a stable complex. GrpE releases ADP from DnaK; ATP binding to DnaK triggers the release of the substrate protein, thus completing the reaction cycle. Several rounds of ATP-dependent interactions between DnaJ, DnaK and GrpE are required for fully efficient folding. The sequence is that of Protein GrpE from Polaromonas sp. (strain JS666 / ATCC BAA-500).